Here is a 479-residue protein sequence, read N- to C-terminus: uncharacterized protein (479 aa).

A disordered region spans residues Leu-180–Thr-203. Residues Ser-187–Ile-202 show a composition bias toward polar residues. Residues Pro-240–Ser-462 enclose the PE-PPE domain.

Belongs to the mycobacterial PPE family.

This is an uncharacterized protein from Mycobacterium tuberculosis (strain CDC 1551 / Oshkosh).